The following is a 151-amino-acid chain: Ubiquitin-conjugating enzyme E2 2 (151 aa).

The disordered stretch occupies residues 1-26 (MSTSARRRLMRDFKRMQTDPPAGVSA). One can recognise a UBC core domain in the interval 4-150 (SARRRLMRDF…VRETVEKSWE (147 aa)). The active-site Glycyl thioester intermediate is C88.

It belongs to the ubiquitin-conjugating enzyme family.

Its subcellular location is the cytoplasm. It is found in the nucleus. It catalyses the reaction S-ubiquitinyl-[E1 ubiquitin-activating enzyme]-L-cysteine + [E2 ubiquitin-conjugating enzyme]-L-cysteine = [E1 ubiquitin-activating enzyme]-L-cysteine + S-ubiquitinyl-[E2 ubiquitin-conjugating enzyme]-L-cysteine.. Its pathway is protein modification; protein ubiquitination. Its function is as follows. Catalyzes the covalent attachment of ubiquitin to other proteins. Plays a role in transcription regulation by catalyzing the monoubiquitination of histone H2B to form H2BK123ub1. H2BK123ub1 gives a specific tag for epigenetic transcriptional activation and is also a prerequisite for H3K4me and H3K79me formation. Also involved in postreplication repair of UV-damaged DNA, in N-end rule-dependent protein degradation and in sporulation. The chain is Ubiquitin-conjugating enzyme E2 2 (uvsJ) from Emericella nidulans (strain FGSC A4 / ATCC 38163 / CBS 112.46 / NRRL 194 / M139) (Aspergillus nidulans).